The primary structure comprises 73 residues: Translation initiation factor IF-1 (73 aa).

The 73-residue stretch at methionine 1–lysine 73 folds into the S1-like domain.

It belongs to the IF-1 family. In terms of assembly, component of the 30S ribosomal translation pre-initiation complex which assembles on the 30S ribosome in the order IF-2 and IF-3, IF-1 and N-formylmethionyl-tRNA(fMet); mRNA recruitment can occur at any time during PIC assembly.

It localises to the cytoplasm. Functionally, one of the essential components for the initiation of protein synthesis. Stabilizes the binding of IF-2 and IF-3 on the 30S subunit to which N-formylmethionyl-tRNA(fMet) subsequently binds. Helps modulate mRNA selection, yielding the 30S pre-initiation complex (PIC). Upon addition of the 50S ribosomal subunit IF-1, IF-2 and IF-3 are released leaving the mature 70S translation initiation complex. In Roseiflexus castenholzii (strain DSM 13941 / HLO8), this protein is Translation initiation factor IF-1.